The following is a 664-amino-acid chain: MGGKEMRNCKELKHEKNGNVTEKVGKNKGKSKKVSKDESLLSFDLFLEGKEHSAYKFMGAHFITENRKRGVRFTTWAPRASKIYVIGDFNNWELKEEYSMKKINERGIWSLFLPKLEEGIKYKFAVVNECGNNTVYKADPYAFKSELRPNTASVLTKIKSFRWGDKRWLNKREKEGLDNKPMNIYELHLGSWKRKDGEFMTYEEISEVLVEYIKEMGYTHVEFMPINEHPLDASWGYQGVGYYSVTSRYGDLNGLKTLINKLHKNNIGVLLDWVPSHFCKDEHGLFMFDGSPTYEYEAWWKANNEGWGTCNFDLGRPEVKSFLFSNAMYWINEFHVDGLRVDAVSNMLYLDYGREYGEWEPNIYGGNGNLEAIAFLKELNTIIKKEGKGAITVAEESTSWEGITKPVEEDGLGFDYKWNMGWMNDTLSYIELDPIYRKYHHNKMNFSMMYNYSEKFILPISHDEVVHGKKSLINKMWGDDWKKYAGLRVYASFMMGHPGKKLMFMGCEFGQFVEWREWEELQWNVIEEFDIHRKTKEYFKALNKFYLENSSLWSLDYEEEGFKWIDADNSEESVLSFIRIGKNKKEKLIFICNFTPEVYYDFKVGVPELGEYVEAFNSDALEFGGAGNIVGDSILKATEESFKDFDYSISVKVPPLGTLVLKVK.

Residues Met-1–Asn-17 are compositionally biased toward basic and acidic residues. The disordered stretch occupies residues Met-1 to Ser-31. Catalysis depends on Asp-342, which acts as the Nucleophile. The active-site Proton donor is the Glu-395.

It belongs to the glycosyl hydrolase 13 family. GlgB subfamily. In terms of assembly, monomer.

The catalysed reaction is Transfers a segment of a (1-&gt;4)-alpha-D-glucan chain to a primary hydroxy group in a similar glucan chain.. It functions in the pathway glycan biosynthesis; glycogen biosynthesis. Catalyzes the formation of the alpha-1,6-glucosidic linkages in glycogen by scission of a 1,4-alpha-linked oligosaccharide from growing alpha-1,4-glucan chains and the subsequent attachment of the oligosaccharide to the alpha-1,6 position. This is 1,4-alpha-glucan branching enzyme GlgB 2 (glgB2) from Clostridium perfringens (strain 13 / Type A).